Consider the following 479-residue polypeptide: Calcium uniporter protein, mitochondrial (479 aa).

Residues 1-54 (MNHALRRATLGLSPGLRASRLQQSFAKHQIPAVYRCEAASTPLQRAFTTSRCFR) constitute a mitochondrion transit peptide. Over 55–323 (QETAAESEKD…DTLAHQGAHR (269 aa)) the chain is Mitochondrial matrix. Disordered stretches follow at residues 56–125 (ETAA…KGRL) and 206–238 (EADQ…HEGP). A coiled-coil region spans residues 59 to 79 (AESEKDDAARREEQSERARKR). Basic and acidic residues predominate over residues 60–75 (ESEKDDAARREEQSER). The span at 83 to 93 (NVTSGSSAQTL) shows a compositional bias: polar residues. Basic and acidic residues-rich tracts occupy residues 94-122 (ENDR…DMKK) and 206-224 (EADQ…KKDN). Residues 324–344 (LAQGGFAALAGWWGVVYYVTF) form a helical membrane-spanning segment. At 345 to 354 (HTQAGWDLVE) the chain is on the mitochondrial intermembrane side. The Selectivity filter motif lies at 350 to 358 (WDLVEPVTY). Residue E354 coordinates Ca(2+). Residues 355–375 (PVTYLAGLTTVMGAYLWFLYI) traverse the membrane as a helical segment. Residues 376–479 (SRDLSYKAAM…GSSDKIKKKQ (104 aa)) lie on the Mitochondrial matrix side of the membrane. Residues 445-462 (KVLEEEKQGRDGTKVTEG) are compositionally biased toward basic and acidic residues. Residues 445–479 (KVLEEEKQGRDGTKVTEGKDEDDGPGSSDKIKKKQ) are disordered.

The protein belongs to the MCU (TC 1.A.77) family. As to quaternary structure, homotetramer, assembles in a dimer or dimers configuration with two interfaces.

The protein localises to the mitochondrion inner membrane. The enzyme catalyses Ca(2+)(in) = Ca(2+)(out). Functionally, highly selective calcium channel localized to the inner mitochondrial membrane, which mediates calcium uptake into the mitochondrial matrix. Mitochondrial calcium homeostasis plays key roles in cellular physiology and regulates ATP production, cytoplasmic calcium signals and activation of cell death pathways. Sufficient to operate as a pore-forming channel without the need of calcium-sensor or auxiliary subunit. The protein is Calcium uniporter protein, mitochondrial of Gibberella zeae (strain ATCC MYA-4620 / CBS 123657 / FGSC 9075 / NRRL 31084 / PH-1) (Wheat head blight fungus).